The chain runs to 278 residues: 4-deoxy-L-threo-5-hexosulose-uronate ketol-isomerase (278 aa).

Residues H196, H198, E203, and H245 each contribute to the Zn(2+) site.

This sequence belongs to the KduI family. It depends on Zn(2+) as a cofactor.

It carries out the reaction 5-dehydro-4-deoxy-D-glucuronate = 3-deoxy-D-glycero-2,5-hexodiulosonate. Its pathway is glycan metabolism; pectin degradation; 2-dehydro-3-deoxy-D-gluconate from pectin: step 4/5. Its function is as follows. Catalyzes the isomerization of 5-dehydro-4-deoxy-D-glucuronate to 3-deoxy-D-glycero-2,5-hexodiulosonate. This chain is 4-deoxy-L-threo-5-hexosulose-uronate ketol-isomerase, found in Salmonella agona (strain SL483).